The chain runs to 67 residues: DNA-directed RNA polymerase subunit omega (67 aa).

This sequence belongs to the RNA polymerase subunit omega family. As to quaternary structure, the RNAP catalytic core consists of 2 alpha, 1 beta, 1 beta' and 1 omega subunit. When a sigma factor is associated with the core the holoenzyme is formed, which can initiate transcription.

It carries out the reaction RNA(n) + a ribonucleoside 5'-triphosphate = RNA(n+1) + diphosphate. Its function is as follows. Promotes RNA polymerase assembly. Latches the N- and C-terminal regions of the beta' subunit thereby facilitating its interaction with the beta and alpha subunits. The sequence is that of DNA-directed RNA polymerase subunit omega from Polaromonas naphthalenivorans (strain CJ2).